We begin with the raw amino-acid sequence, 1413 residues long: DNA-directed RNA polymerase subunit beta' (1413 aa).

Residues Cys-70, Cys-72, Cys-85, and Cys-88 each coordinate Zn(2+). Mg(2+) is bound by residues Asp-460, Asp-462, and Asp-464. Zn(2+) contacts are provided by Cys-814, Cys-888, Cys-895, and Cys-898.

Belongs to the RNA polymerase beta' chain family. The RNAP catalytic core consists of 2 alpha, 1 beta, 1 beta' and 1 omega subunit. When a sigma factor is associated with the core the holoenzyme is formed, which can initiate transcription. Mg(2+) is required as a cofactor. Zn(2+) serves as cofactor.

The enzyme catalyses RNA(n) + a ribonucleoside 5'-triphosphate = RNA(n+1) + diphosphate. Functionally, DNA-dependent RNA polymerase catalyzes the transcription of DNA into RNA using the four ribonucleoside triphosphates as substrates. The sequence is that of DNA-directed RNA polymerase subunit beta' from Bordetella avium (strain 197N).